We begin with the raw amino-acid sequence, 511 residues long: IWS1-like protein (511 aa).

Positions 1-200 are disordered; it reads MSDHEEESHG…DDGPVDRHGR (200 aa). Low complexity-rich tracts occupy residues 11-30 and 55-86; these read ASPT…PISP and APAS…SPVK. Positions 94–103 are enriched in acidic residues; that stretch reads DSDEDSDAEE. A compositionally biased stretch (basic and acidic residues) spans 134 to 143; that stretch reads HEGTSKKEPT. Residues 166-179 show a composition bias toward acidic residues; the sequence is LDEFVEGRDEEESQ. Residues 294-374 enclose the TFIIS N-terminal domain; it reads SALSEWLAPL…GEWARPIYHL (81 aa). The interval 382–454 is disordered; it reads SRQEREERDY…RARVPKPSTK (73 aa). Composition is skewed to basic and acidic residues over residues 383–395 and 414–425; these read RQER…SRMP and DQPKRPRIRDAD.

Belongs to the IWS1 family.

It localises to the nucleus. This chain is IWS1-like protein, found in Caenorhabditis elegans.